A 194-amino-acid chain; its full sequence is dCTP deaminase (194 aa).

DCTP contacts are provided by residues 110–115 (RSSLAR), aspartate 128, 136–138 (VLE), tyrosine 171, lysine 178, and glutamine 182. Catalysis depends on glutamate 138, which acts as the Proton donor/acceptor. The tract at residues 169-194 (RPYNKRDNAKYKDQTSAVGSRISGEN) is disordered. A compositionally biased stretch (basic and acidic residues) spans 170–181 (PYNKRDNAKYKD). Residues 182 to 194 (QTSAVGSRISGEN) are compositionally biased toward polar residues.

Belongs to the dCTP deaminase family. In terms of assembly, homotrimer.

It catalyses the reaction dCTP + H2O + H(+) = dUTP + NH4(+). It participates in pyrimidine metabolism; dUMP biosynthesis; dUMP from dCTP (dUTP route): step 1/2. Catalyzes the deamination of dCTP to dUTP. The polypeptide is dCTP deaminase (Marinomonas sp. (strain MWYL1)).